The sequence spans 305 residues: Glycine--tRNA ligase alpha subunit (305 aa).

It belongs to the class-II aminoacyl-tRNA synthetase family. Tetramer of two alpha and two beta subunits.

The protein resides in the cytoplasm. It catalyses the reaction tRNA(Gly) + glycine + ATP = glycyl-tRNA(Gly) + AMP + diphosphate. The chain is Glycine--tRNA ligase alpha subunit from Streptococcus suis (strain 98HAH33).